The chain runs to 338 residues: MNLNKHPRHPLTFGPTPIQPLKRLSAHLGGKVELYAKREDCNSGLAFGGNKTRKLEYLVPEVLAGGYDTLVSIGGIQSNQTRQVAAVAAHLGLKCVLVQENWVNYADAVYDRVGNIELSRILGADVRLDAAGFDIGIRPSWEQAMEDVRRAGGKPFPIPAGCSEHPLGGLGFVGFAEEVRQQEAEFGFRFDYIVVCSVTGSTQAGMVVGFAADGRADRVIGIDASAKPEQTREQILRIARDTAKLVELGRDITEDDVVLDTRYGGPEYGLPNEGTLEAIRLCARQEGMLTDPVYEGKSMHGMIDRVRGGEFPEGSRVLYAHLGGVPALNAYSFLFRNG.

Residue K51 is modified to N6-(pyridoxal phosphate)lysine. The Nucleophile role is filled by S78.

This sequence belongs to the ACC deaminase/D-cysteine desulfhydrase family. In terms of assembly, homotrimer. It depends on pyridoxal 5'-phosphate as a cofactor.

It carries out the reaction 1-aminocyclopropane-1-carboxylate + H2O = 2-oxobutanoate + NH4(+). In terms of biological role, catalyzes a cyclopropane ring-opening reaction, the irreversible conversion of 1-aminocyclopropane-1-carboxylate (ACC) to ammonia and alpha-ketobutyrate. Allows growth on ACC as a nitrogen source. This Ralstonia nicotianae (strain ATCC BAA-1114 / GMI1000) (Ralstonia solanacearum) protein is 1-aminocyclopropane-1-carboxylate deaminase.